The sequence spans 346 residues: Structure-specific endonuclease subunit SLX1 (346 aa).

A GIY-YIG domain is found at 10–92 (ALYCVYILRS…TNPHTSLHIP (83 aa)). Residues 238-296 (CVVCKEEIDPEEGGLHAVCSNEGCEGVGHLRCWGRYLLKSEEGGGEGAILPVGGRCPRC) form an SLX1-type zinc finger. Over residues 324-336 (KVKRKRAPRKKTA) the composition is skewed to basic residues. The disordered stretch occupies residues 324–346 (KVKRKRAPRKKTAKTKETREEDG). Residues 337–346 (KTKETREEDG) are compositionally biased toward basic and acidic residues.

It belongs to the SLX1 family. Forms a heterodimer with SLX4. A divalent metal cation serves as cofactor.

Its subcellular location is the nucleus. Functionally, catalytic subunit of the SLX1-SLX4 structure-specific endonuclease that resolves DNA secondary structures generated during DNA repair and recombination. Has endonuclease activity towards branched DNA substrates, introducing single-strand cuts in duplex DNA close to junctions with ss-DNA. This is Structure-specific endonuclease subunit SLX1 from Podospora anserina (strain S / ATCC MYA-4624 / DSM 980 / FGSC 10383) (Pleurage anserina).